Reading from the N-terminus, the 391-residue chain is Yellow-related salivary protein ASP4 (391 aa).

The signal sequence occupies residues 1-18 (MKIFLCIIAVVSLQGVVA). The N-linked (GlcNAc...) asparagine glycan is linked to Asn29.

This sequence belongs to the major royal jelly protein family. As to expression, female salivary gland (at protein level).

The protein localises to the secreted. In terms of biological role, probably modulates blood feeding of sand flies on vertebrate species by binding and sequestering different mediators involved in the host response. Binds biogenic amines. Binds serotonin and dopamine with high affinity. Binds adrenaline, octopamine and adrenaline with medium affinity. Binds histamine with low affinity. This chain is Yellow-related salivary protein ASP4, found in Phlebotomus orientalis (Phlebotomine sand fly).